We begin with the raw amino-acid sequence, 184 residues long: Photosystem I assembly protein Ycf4 (184 aa).

The next 2 membrane-spanning stretches (helical) occupy residues 22–42 and 57–77; these read FCWA…GTSS and ILFF…LFIS.

Belongs to the Ycf4 family.

It localises to the plastid. The protein resides in the chloroplast thylakoid membrane. Its function is as follows. Seems to be required for the assembly of the photosystem I complex. The chain is Photosystem I assembly protein Ycf4 from Liriodendron tulipifera (Tuliptree).